Reading from the N-terminus, the 150-residue chain is Small ribosomal subunit protein uS9 (150 aa).

It belongs to the universal ribosomal protein uS9 family.

This is Small ribosomal subunit protein uS9 from Mycolicibacterium smegmatis (strain ATCC 700084 / mc(2)155) (Mycobacterium smegmatis).